The chain runs to 258 residues: Thiazole synthase (258 aa).

The Schiff-base intermediate with DXP role is filled by K97. 1-deoxy-D-xylulose 5-phosphate contacts are provided by residues G158, 184-185 (AG), and 206-207 (NT).

Belongs to the ThiG family. As to quaternary structure, homotetramer. Forms heterodimers with either ThiH or ThiS.

Its subcellular location is the cytoplasm. It carries out the reaction [ThiS sulfur-carrier protein]-C-terminal-Gly-aminoethanethioate + 2-iminoacetate + 1-deoxy-D-xylulose 5-phosphate = [ThiS sulfur-carrier protein]-C-terminal Gly-Gly + 2-[(2R,5Z)-2-carboxy-4-methylthiazol-5(2H)-ylidene]ethyl phosphate + 2 H2O + H(+). Its pathway is cofactor biosynthesis; thiamine diphosphate biosynthesis. Its function is as follows. Catalyzes the rearrangement of 1-deoxy-D-xylulose 5-phosphate (DXP) to produce the thiazole phosphate moiety of thiamine. Sulfur is provided by the thiocarboxylate moiety of the carrier protein ThiS. In vitro, sulfur can be provided by H(2)S. This is Thiazole synthase from Bacteroides fragilis (strain ATCC 25285 / DSM 2151 / CCUG 4856 / JCM 11019 / LMG 10263 / NCTC 9343 / Onslow / VPI 2553 / EN-2).